We begin with the raw amino-acid sequence, 516 residues long: Apolipoprotein N-acyltransferase (516 aa).

5 consecutive transmembrane segments (helical) span residues 23–43 (ILIL…AFAP), 68–88 (AFWL…RWIY), 94–114 (VAGL…AYLA), 135–155 (WLLA…WVMT), and 178–198 (LGGI…LAML). The region spanning 241–481 (AQGNIAQELK…VLTGFAQSRQ (241 aa)) is the CN hydrolase domain. The active-site Proton acceptor is the Glu-279. Lys-339 is an active-site residue. Cys-391 acts as the Nucleophile in catalysis. A helical membrane pass occupies residues 489–509 (FGNLPVVLGCGALLLLALLLG).

The protein belongs to the CN hydrolase family. Apolipoprotein N-acyltransferase subfamily.

It is found in the cell inner membrane. It catalyses the reaction N-terminal S-1,2-diacyl-sn-glyceryl-L-cysteinyl-[lipoprotein] + a glycerophospholipid = N-acyl-S-1,2-diacyl-sn-glyceryl-L-cysteinyl-[lipoprotein] + a 2-acyl-sn-glycero-3-phospholipid + H(+). Its pathway is protein modification; lipoprotein biosynthesis (N-acyl transfer). In terms of biological role, catalyzes the phospholipid dependent N-acylation of the N-terminal cysteine of apolipoprotein, the last step in lipoprotein maturation. This Chromobacterium violaceum (strain ATCC 12472 / DSM 30191 / JCM 1249 / CCUG 213 / NBRC 12614 / NCIMB 9131 / NCTC 9757 / MK) protein is Apolipoprotein N-acyltransferase.